A 514-amino-acid chain; its full sequence is 2-isopropylmalate synthase (514 aa).

The region spanning 5 to 268 (LIIFDTTLRD…DVGIDTSQIV (264 aa)) is the Pyruvate carboxyltransferase domain. 4 residues coordinate Mn(2+): Asp-14, His-202, His-204, and Asn-239. The interval 395–514 (KFVSLSQHSE…KDDKVNPQRS (120 aa)) is regulatory domain.

The protein belongs to the alpha-IPM synthase/homocitrate synthase family. LeuA type 1 subfamily. Homodimer. It depends on Mn(2+) as a cofactor.

It is found in the cytoplasm. The catalysed reaction is 3-methyl-2-oxobutanoate + acetyl-CoA + H2O = (2S)-2-isopropylmalate + CoA + H(+). It functions in the pathway amino-acid biosynthesis; L-leucine biosynthesis; L-leucine from 3-methyl-2-oxobutanoate: step 1/4. Catalyzes the condensation of the acetyl group of acetyl-CoA with 3-methyl-2-oxobutanoate (2-ketoisovalerate) to form 3-carboxy-3-hydroxy-4-methylpentanoate (2-isopropylmalate). The protein is 2-isopropylmalate synthase of Burkholderia lata (strain ATCC 17760 / DSM 23089 / LMG 22485 / NCIMB 9086 / R18194 / 383).